The sequence spans 173 residues: Methylated-DNA--protein-cysteine methyltransferase (173 aa).

The Nucleophile; methyl group acceptor role is filled by Cys143.

This sequence belongs to the MGMT family.

The protein localises to the cytoplasm. It carries out the reaction a 6-O-methyl-2'-deoxyguanosine in DNA + L-cysteinyl-[protein] = S-methyl-L-cysteinyl-[protein] + a 2'-deoxyguanosine in DNA. The enzyme catalyses a 4-O-methyl-thymidine in DNA + L-cysteinyl-[protein] = a thymidine in DNA + S-methyl-L-cysteinyl-[protein]. In terms of biological role, involved in the cellular defense against the biological effects of O6-methylguanine (O6-MeG) and O4-methylthymine (O4-MeT) in DNA. Repairs the methylated nucleobase in DNA by stoichiometrically transferring the methyl group to a cysteine residue in the enzyme. This is a suicide reaction: the enzyme is irreversibly inactivated. The protein is Methylated-DNA--protein-cysteine methyltransferase of Pyrococcus sp. (strain NA2).